The chain runs to 125 residues: Large ribosomal subunit protein bL12 (125 aa).

The protein belongs to the bacterial ribosomal protein bL12 family. As to quaternary structure, homodimer. Part of the ribosomal stalk of the 50S ribosomal subunit. Forms a multimeric L10(L12)X complex, where L10 forms an elongated spine to which 2 to 4 L12 dimers bind in a sequential fashion. Binds GTP-bound translation factors.

In terms of biological role, forms part of the ribosomal stalk which helps the ribosome interact with GTP-bound translation factors. Is thus essential for accurate translation. The sequence is that of Large ribosomal subunit protein bL12 from Campylobacter jejuni subsp. jejuni serotype O:2 (strain ATCC 700819 / NCTC 11168).